Reading from the N-terminus, the 284-residue chain is Hemin import ATP-binding protein HmuV (284 aa).

The ABC transporter domain occupies 33-266 (LGARHLSKSY…KLLSDVYSYE (234 aa)). 65–72 (GPNGAGKS) contributes to the ATP binding site.

Belongs to the ABC transporter superfamily. Heme (hemin) importer (TC 3.A.1.14.5) family. The complex is composed of two ATP-binding proteins (HmuV), two transmembrane proteins (HmuU) and a solute-binding protein (HmuT).

It localises to the cell membrane. Functionally, part of the ABC transporter complex HmuTUV involved in hemin import. Responsible for energy coupling to the transport system. This is Hemin import ATP-binding protein HmuV from Thermobifida fusca (strain YX).